Here is a 593-residue protein sequence, read N- to C-terminus: Multidrug resistance-like ATP-binding protein MdlB (593 aa).

Residues 1–25 (MRSFSQLWPTLKRLLAYGSPWRKPL) are Cytoplasmic-facing. Positions 25–310 (LGIAVLMMWV…LTTQQAMLQQ (286 aa)) constitute an ABC transmembrane type-1 domain. Residues 26–46 (GIAVLMMWVAAAAEVSGPLLI) form a helical membrane-spanning segment. Topologically, residues 47–62 (SYFIDNMVAKNNLPLK) are periplasmic. A helical membrane pass occupies residues 63–83 (VVAGLAAAYVGLQLFAAGLHY). Over 84–140 (AQSLLFNRAAVGVVQQLRTDVMDAALRQPLSEFDTQPVGQVISRVTNDTEVIRDLYV) the chain is Cytoplasmic. A helical transmembrane segment spans residues 141 to 161 (TVVATVLRSAALVGAMLVAMF). At 162–164 (SLD) the chain is on the periplasmic side. The helical transmembrane segment at 165 to 185 (WRMALVAIMIFPVVLVVMVIY) threads the bilayer. The Cytoplasmic portion of the chain corresponds to 186–254 (QRYSTPIVRR…LRLDGFLLRP (69 aa)). A helical membrane pass occupies residues 255–275 (LLSLFSSLILCGLLMLFGFSA). The Periplasmic segment spans residues 276-278 (SGT). A helical transmembrane segment spans residues 279–299 (IEVGVLYAFISYLGRLNEPLI). Residues 300–593 (ELTTQQAMLQ…SVREEESLSA (294 aa)) lie on the Cytoplasmic side of the membrane. The region spanning 341 to 574 (IEVDNVSFAY…QGRYWQMYQL (234 aa)) is the ABC transporter domain. Residue 374–381 (GHTGSGKS) coordinates ATP.

The protein belongs to the ABC transporter superfamily. Drug exporter-2 (TC 3.A.1.117) family.

The protein resides in the cell inner membrane. The catalysed reaction is ATP + H2O + xenobioticSide 1 = ADP + phosphate + xenobioticSide 2.. This chain is Multidrug resistance-like ATP-binding protein MdlB (mdlB), found in Escherichia coli O6:H1 (strain CFT073 / ATCC 700928 / UPEC).